Here is a 248-residue protein sequence, read N- to C-terminus: ATP synthase subunit a (248 aa).

A run of 6 helical transmembrane segments spans residues 34–54, 91–111, 121–141, 147–167, 196–216, and 220–240; these read TNAT…LVFG, YFPY…LGLL, IAVT…LGFV, FLGL…LAVI, VFAA…AITA, and LEVL…CVYL.

The protein belongs to the ATPase A chain family. As to quaternary structure, F-type ATPases have 2 components, CF(1) - the catalytic core - and CF(0) - the membrane proton channel. CF(1) has five subunits: alpha(3), beta(3), gamma(1), delta(1), epsilon(1). CF(0) has three main subunits: a(1), b(2) and c(9-12). The alpha and beta chains form an alternating ring which encloses part of the gamma chain. CF(1) is attached to CF(0) by a central stalk formed by the gamma and epsilon chains, while a peripheral stalk is formed by the delta and b chains.

The protein resides in the cell inner membrane. Its function is as follows. Key component of the proton channel; it plays a direct role in the translocation of protons across the membrane. The chain is ATP synthase subunit a from Paracoccus denitrificans (strain Pd 1222).